We begin with the raw amino-acid sequence, 203 residues long: Histidine biosynthesis bifunctional protein HisIE (203 aa).

The phosphoribosyl-AMP cyclohydrolase stretch occupies residues Met-1–Phe-114. The segment at Leu-115 to Gln-203 is phosphoribosyl-ATP pyrophosphohydrolase.

This sequence in the N-terminal section; belongs to the PRA-CH family. It in the C-terminal section; belongs to the PRA-PH family.

The protein resides in the cytoplasm. The enzyme catalyses 1-(5-phospho-beta-D-ribosyl)-ATP + H2O = 1-(5-phospho-beta-D-ribosyl)-5'-AMP + diphosphate + H(+). It catalyses the reaction 1-(5-phospho-beta-D-ribosyl)-5'-AMP + H2O = 1-(5-phospho-beta-D-ribosyl)-5-[(5-phospho-beta-D-ribosylamino)methylideneamino]imidazole-4-carboxamide. It functions in the pathway amino-acid biosynthesis; L-histidine biosynthesis; L-histidine from 5-phospho-alpha-D-ribose 1-diphosphate: step 2/9. It participates in amino-acid biosynthesis; L-histidine biosynthesis; L-histidine from 5-phospho-alpha-D-ribose 1-diphosphate: step 3/9. The chain is Histidine biosynthesis bifunctional protein HisIE from Shigella sonnei (strain Ss046).